The sequence spans 457 residues: Phosphomethylpyrimidine synthase (457 aa).

Substrate is bound by residues asparagine 80, methionine 109, tyrosine 139, histidine 175, 195 to 197 (SRG), 236 to 239 (DSLR), and glutamate 275. Histidine 279 contacts Zn(2+). Position 302 (tyrosine 302) interacts with substrate. Position 343 (histidine 343) interacts with Zn(2+). The [4Fe-4S] cluster site is built by cysteine 423, cysteine 426, and cysteine 431.

The protein belongs to the ThiC family. [4Fe-4S] cluster is required as a cofactor.

It catalyses the reaction 5-amino-1-(5-phospho-beta-D-ribosyl)imidazole + S-adenosyl-L-methionine = 4-amino-2-methyl-5-(phosphooxymethyl)pyrimidine + CO + 5'-deoxyadenosine + formate + L-methionine + 3 H(+). It participates in cofactor biosynthesis; thiamine diphosphate biosynthesis. In terms of biological role, catalyzes the synthesis of the hydroxymethylpyrimidine phosphate (HMP-P) moiety of thiamine from aminoimidazole ribotide (AIR) in a radical S-adenosyl-L-methionine (SAM)-dependent reaction. This chain is Phosphomethylpyrimidine synthase, found in Nostoc sp. (strain PCC 7120 / SAG 25.82 / UTEX 2576).